A 273-amino-acid chain; its full sequence is Large ribosomal subunit protein uL2 (273 aa).

The disordered stretch occupies residues 221–262; that stretch reads RGTAMNPVDHPHGGGEGRNFGKHPVTPWGVQTKGKKTRHNKR. Over residues 253 to 262 the composition is skewed to basic residues; that stretch reads KGKKTRHNKR.

Belongs to the universal ribosomal protein uL2 family. In terms of assembly, part of the 50S ribosomal subunit. Forms a bridge to the 30S subunit in the 70S ribosome.

In terms of biological role, one of the primary rRNA binding proteins. Required for association of the 30S and 50S subunits to form the 70S ribosome, for tRNA binding and peptide bond formation. It has been suggested to have peptidyltransferase activity; this is somewhat controversial. Makes several contacts with the 16S rRNA in the 70S ribosome. The sequence is that of Large ribosomal subunit protein uL2 from Aggregatibacter actinomycetemcomitans (Actinobacillus actinomycetemcomitans).